The sequence spans 595 residues: Estrogen receptor (595 aa).

Residues 1–184 are modulating (transactivation AF-1); mediates interaction with MACROD1; the sequence is MTMTLHTKAS…AMESAKETRY (184 aa). O-linked (GlcNAc) serine glycosylation occurs at Ser10. The interval 35–47 is required for interaction with NCOA1; the sequence is LERPLGEVYVDSS. The interval 35-174 is interaction with DDX5; self-association; it reads LERPLGEVYV…LASTSDKGSM (140 aa). Phosphoserine; by CDK2 occurs at positions 104 and 106. Ser118 is subject to Phosphoserine. The tract at residues 144–174 is disordered; the sequence is AGPPAFYRPNSDNRRQGGRERLASTSDKGSM. A compositionally biased stretch (basic and acidic residues) spans 154–165; it reads SDNRRQGGRERL. Residue Ser167 is modified to Phosphoserine; by CK2. 2 consecutive NR C4-type zinc fingers follow at residues 185–205 and 221–245; these read CAVC…CEGC and CPAT…LRKC. Residues 185 to 250 constitute a DNA-binding region (nuclear receptor); sequence CAVCNDYASG…RLRKCYEVGM (66 aa). The tract at residues 185 to 310 is mediates interaction with DNTTIP2; it reads CAVCNDYASG…TKKNSPVLSL (126 aa). The interval 251-310 is hinge; that stretch reads MKGGIRKDRRGGRMLKHKRQRDDGEGRNEAVPPGDMRSANLWPSPLLIKHTKKNSPVLSL. Residues 257–269 show a composition bias toward basic residues; the sequence is KDRRGGRMLKHKR. The disordered stretch occupies residues 257 to 288; sequence KDRRGGRMLKHKRQRDDGEGRNEAVPPGDMRS. Position 260 is an asymmetric dimethylarginine; by PRMT1 (Arg260). Residues 262-595 are interaction with AKAP13; it reads GRMLKHKRQR…GEAENFPTTI (334 aa). The interval 264-594 is self-association; sequence MLKHKRQRDD…TGEAENFPTT (331 aa). The NR LBD domain occupies 311–547; the sequence is TADQMISALL…DLLLEMLDAH (237 aa). Residues 311 to 594 are transactivation AF-2; it reads TADQMISALL…TGEAENFPTT (284 aa). The 17beta-estradiol site is built by Glu353 and Arg394. Cys447 carries the S-palmitoyl cysteine lipid modification. A 17beta-estradiol-binding site is contributed by His524. Phosphotyrosine; by Tyr-kinases is present on Tyr537. The tract at residues 551-575 is disordered; that stretch reads APTNLGGPPPEDMSQSQLATSGSTP. Positions 563 to 575 are enriched in polar residues; the sequence is MSQSQLATSGSTP.

This sequence belongs to the nuclear hormone receptor family. NR3 subfamily. Binds DNA as a homodimer. Can form a heterodimer with ESR2. Interacts with coactivator NCOA5. Interacts with PELP1, the interaction is enhanced by 17-beta-estradiol; the interaction increases ESR1 transcriptional activity. Interacts with NCOA7; the interaction is ligand-inducible. Interacts with AKAP13, CUEDC2, HEXIM1, KDM5A, MAP1S, SMARD1, and UBE1C. Interacts with MUC1; the interaction is stimulated by 7 beta-estradiol (E2) and enhances ESR1-mediated transcription. Interacts with DNTTIP2, and UIMC1. Interacts with KMT2D/MLL2. Interacts with ATAD2; the interaction is enhanced by estradiol. Interacts with KIF18A and LDB1. Interacts with RLIM (via its C-terminus). Interacts with MACROD1. Interacts with SH2D4A and PLCG. Interacts with SH2D4A; the interaction blocks binding to PLCG and inhibits estrogen-induced cell proliferation. Interacts with DYNLL1. Interacts with CCDC62; the interaction requires estradiol and appears to enhance the transcription of target genes. Interacts with NR2C1; the interaction prevents homodimerization of ESR1 and suppresses its transcriptional activity and cell growth. Interacts with DNAAF4. Interacts with PRMT2. Interacts with RBFOX2. Interacts with EP300; the interaction is estrogen-dependent and enhanced by CITED1. Interacts with CITED1; the interaction is estrogen-dependent. Interacts with FAM120B, FOXL2, PHB2 and SLC30A9. Interacts with coactivators NCOA3 and NCOA6. Interacts with STK3/MST2 only in the presence of SAV1 and vice-versa. Binds to CSNK1D. Interacts with NCOA2; NCOA2 can interact with ESR1 AF-1 and AF-2 domains simultaneously and mediate their transcriptional synergy. Interacts with DDX5. Interacts with NCOA1; the interaction seems to require a self-association of N-terminal and C-terminal regions. Interacts with ZNF366, DDX17, NFKB1, RELA, SP1 and SP3. Interacts with NRIP1. Interacts with GPER1; the interaction occurs in an estrogen-dependent manner. Interacts with CLOCK and the interaction is stimulated by estrogen. Interacts with TRIP4 (ufmylated); estrogen dependent. Interacts with LMTK3; the interaction phosphorylates ESR1 (in vitro) and protects it against proteasomal degradation. Interacts with CCAR2 (via N-terminus) in a ligand-independent manner. Interacts with ZFHX3. Interacts with SFR1 in a ligand-dependent and -independent manner. Interacts with DCAF13, LATS1 and DCAF1; regulates ESR1 ubiquitination and ubiquitin-mediated proteasomal degradation. Interacts (via DNA-binding domain) with POU4F2 (C-terminus); this interaction increases the estrogen receptor ESR1 transcriptional activity in a DNA- and ligand 17-beta-estradiol-independent manner. Interacts with ESRRB isoform 1. Interacts with UBE3A and WBP2. Interacts with GTF2B. Interacts with RBM39. In the absence of hormonal ligand, interacts with TACC1. Interacts with PI3KR1 or PI3KR2 and PTK2/FAK1. Interacts with SRC. Interacts with BAG1; the interaction is promoted in the absence of estradiol (17-beta-estradiol/E2). Interacts with and ubiquitinated by STUB1; the interaction is promoted in the absence of estradiol (17-beta-estradiol/E2). Interacts with NEDD8. Post-translationally, phosphorylated by cyclin A/CDK2 and CK1. Phosphorylation probably enhances transcriptional activity. Dephosphorylation at Ser-118 by PPP5C inhibits its transactivation activity. Phosphorylated by LMTK3 (in vitro). In terms of processing, ubiquitinated; regulated by LATS1 via DCAF1 it leads to ESR1 proteasomal degradation. Deubiquitinated by OTUB1. Ubiquitinated by STUB1/CHIP; in the CA1 hippocampal region following loss of endogenous circulating estradiol (17-beta-estradiol/E2). Ubiquitinated by UBR5, leading to its degradation: UBR5 specifically recognizes and binds ligand-bound ESR1 when it is not associated with coactivators (NCOAs). In presence of NCOAs, the UBR5-degron is not accessible, preventing its ubiquitination and degradation. Palmitoylated at Cys-447 by ZDHHC7 and ZDHHC21. Palmitoylation is required for plasma membrane targeting and for rapid intracellular signaling via ERK and AKT kinases and cAMP generation, but not for signaling mediated by the nuclear hormone receptor. Post-translationally, dimethylated by PRMT1 at Arg-260. The methylation may favor cytoplasmic localization. Demethylated by JMJD6 at Arg-260.

The protein resides in the nucleus. The protein localises to the cytoplasm. Its subcellular location is the golgi apparatus. It is found in the cell membrane. Its function is as follows. Nuclear hormone receptor. The steroid hormones and their receptors are involved in the regulation of eukaryotic gene expression and affect cellular proliferation and differentiation in target tissues. Ligand-dependent nuclear transactivation involves either direct homodimer binding to a palindromic estrogen response element (ERE) sequence or association with other DNA-binding transcription factors, such as AP-1/c-Jun, c-Fos, ATF-2, Sp1 and Sp3, to mediate ERE-independent signaling. Ligand binding induces a conformational change allowing subsequent or combinatorial association with multiprotein coactivator complexes through LXXLL motifs of their respective components. Mutual transrepression occurs between the estrogen receptor (ER) and NF-kappa-B in a cell-type specific manner. Decreases NF-kappa-B DNA-binding activity and inhibits NF-kappa-B-mediated transcription from the IL6 promoter and displace RELA/p65 and associated coregulators from the promoter. Recruited to the NF-kappa-B response element of the CCL2 and IL8 promoters and can displace CREBBP. Present with NF-kappa-B components RELA/p65 and NFKB1/p50 on ERE sequences. Can also act synergistically with NF-kappa-B to activate transcription involving respective recruitment adjacent response elements; the function involves CREBBP. Can activate the transcriptional activity of TFF1. Also mediates membrane-initiated estrogen signaling involving various kinase cascades. Essential for MTA1-mediated transcriptional regulation of BRCA1 and BCAS3. Maintains neuronal survival in response to ischemic reperfusion injury when in the presence of circulating estradiol (17-beta-estradiol/E2). The protein is Estrogen receptor (ESR1) of Sus scrofa (Pig).